The primary structure comprises 74 residues: Small ribosomal subunit protein bS18 (74 aa).

It belongs to the bacterial ribosomal protein bS18 family. As to quaternary structure, part of the 30S ribosomal subunit. Forms a tight heterodimer with protein bS6.

Functionally, binds as a heterodimer with protein bS6 to the central domain of the 16S rRNA, where it helps stabilize the platform of the 30S subunit. The protein is Small ribosomal subunit protein bS18 of Novosphingobium aromaticivorans (strain ATCC 700278 / DSM 12444 / CCUG 56034 / CIP 105152 / NBRC 16084 / F199).